The chain runs to 333 residues: D-threonate 4-phosphate dehydrogenase (333 aa).

Residues His-140 and Thr-141 each coordinate substrate. A divalent metal cation-binding residues include His-170, His-214, and His-270. Substrate is bound by residues Lys-278, Asn-287, and Arg-296.

The protein belongs to the PdxA family. PdxA2 subfamily. As to quaternary structure, homodimer. A divalent metal cation serves as cofactor.

It carries out the reaction 4-O-phospho-D-threonate + NAD(+) = dihydroxyacetone phosphate + CO2 + NADH. Its function is as follows. Catalyzes the NAD-dependent oxidation and subsequent decarboxylation of D-threonate 4-phosphate to produce dihydroxyacetone phosphate (DHAP). Can also use 4-hydroxy-L-threonine 4-phosphate as substrate. In Cupriavidus necator (strain ATCC 17699 / DSM 428 / KCTC 22496 / NCIMB 10442 / H16 / Stanier 337) (Ralstonia eutropha), this protein is D-threonate 4-phosphate dehydrogenase.